A 178-amino-acid chain; its full sequence is MHSSALLCCLVLLTGVRASPGQGTQSENSCTRFPGNLPHMLRDLRDAFSRVKTFFQMKDQLDNILLKESLLEDFKGYLGCQALSEMIQFYLEEVMPQAENHDPDIKEHVNSLGENLKTLRLRLRRCHRFLPCENKSKAVEQVMNAFSKLQEKGVYKAMSEFDIFINYIEAYMTMKIQN.

The first 18 residues, 1 to 18, serve as a signal peptide directing secretion; the sequence is MHSSALLCCLVLLTGVRA. Disulfide bonds link cysteine 30-cysteine 126 and cysteine 80-cysteine 132. N-linked (GlcNAc...) asparagine glycosylation occurs at asparagine 134.

The protein belongs to the IL-10 family. As to quaternary structure, homodimer. Interacts with IL10RA and IL10RB.

The protein localises to the secreted. Its function is as follows. Major immune regulatory cytokine that acts on many cells of the immune system where it has profound anti-inflammatory functions, limiting excessive tissue disruption caused by inflammation. Mechanistically, IL10 binds to its heterotetrameric receptor comprising IL10RA and IL10RB leading to JAK1 and STAT2-mediated phosphorylation of STAT3. In turn, STAT3 translocates to the nucleus where it drives expression of anti-inflammatory mediators. Targets antigen-presenting cells (APCs) such as macrophages and monocytes and inhibits their release of pro-inflammatory cytokines including granulocyte-macrophage colony-stimulating factor /GM-CSF, granulocyte colony-stimulating factor/G-CSF, IL-1 alpha, IL-1 beta, IL-6, IL-8 and TNF-alpha. Also interferes with antigen presentation by reducing the expression of MHC-class II and co-stimulatory molecules, thereby inhibiting their ability to induce T cell activation. In addition, controls the inflammatory response of macrophages by reprogramming essential metabolic pathways including mTOR signaling. In Macaca nemestrina (Pig-tailed macaque), this protein is Interleukin-10 (IL10).